The sequence spans 306 residues: Palmitoyl-protein thioesterase ABHD10, mitochondrial (306 aa).

The N-terminal 52 residues, 1-52 (MAGVGLAAVPAWVPCRRWGLAAVTFGFHHGLSTLLARKTERAPQWLRACRHK), are a transit peptide targeting the mitochondrion. Residues 78-177 (IIFIPGYISN…KVVALVGVAT (100 aa)) enclose the AB hydrolase-1 domain. Active-site charge relay system residues include Ser-152, Asp-249, and His-279.

The protein belongs to the AB hydrolase superfamily.

The protein resides in the mitochondrion. The catalysed reaction is S-hexadecanoyl-L-cysteinyl-[protein] + H2O = L-cysteinyl-[protein] + hexadecanoate + H(+). It carries out the reaction mycophenolic acid O-acyl-beta-D-glucuronide + H2O = mycophenolate + D-glucuronate + H(+). Its activity is regulated as follows. Inhibited by palmostatin-B. Acts as an acyl-protein thioesterase that hydrolyzes fatty acids from acylated residues in proteins. Regulates the mitochondrial S-depalmitoylation of the nucleophilic active site residue of peroxiredoxin-5/PRDX5, a key antioxidant protein, therefore modulating mitochondrial antioxidant ability. Also catalyzes the deglucuronidation of mycophenolic acid acyl-glucuronide, an active metabolite of the immunosuppressant drug mycophenolate. The protein is Palmitoyl-protein thioesterase ABHD10, mitochondrial (ABHD10) of Bos taurus (Bovine).